Here is a 146-residue protein sequence, read N- to C-terminus: Large ribosomal subunit protein bL9 (146 aa).

Belongs to the bacterial ribosomal protein bL9 family.

Binds to the 23S rRNA. In Nautilia profundicola (strain ATCC BAA-1463 / DSM 18972 / AmH), this protein is Large ribosomal subunit protein bL9.